The sequence spans 212 residues: Ribonuclease HII (212 aa).

In terms of domain architecture, RNase H type-2 spans 28 to 212; that stretch reads SLIAGIDEVG…KSFAPVRQVF (185 aa). The a divalent metal cation site is built by Asp-34, Glu-35, and Asp-127.

The protein belongs to the RNase HII family. Mn(2+) is required as a cofactor. It depends on Mg(2+) as a cofactor.

The protein resides in the cytoplasm. The catalysed reaction is Endonucleolytic cleavage to 5'-phosphomonoester.. In terms of biological role, endonuclease that specifically degrades the RNA of RNA-DNA hybrids. The chain is Ribonuclease HII from Chlamydia abortus (strain DSM 27085 / S26/3) (Chlamydophila abortus).